A 385-amino-acid polypeptide reads, in one-letter code: Chaperone protein DnaJ (385 aa).

The region spanning 5–72 (DYYEVLGVGK…QKRAAYDQFG (68 aa)) is the J domain. Positions 26 to 48 (RKLAMKHHPDRNQGDGAKASEEK) are disordered. The segment covering 35-48 (DRNQGDGAKASEEK) has biased composition (basic and acidic residues). Residues 145 to 223 (GKESQIRIPT…CNGAGKVKKQ (79 aa)) form a CR-type zinc finger. Zn(2+) is bound by residues Cys158, Cys161, Cys175, Cys178, Cys197, Cys200, Cys211, and Cys214. CXXCXGXG motif repeat units follow at residues 158–165 (CDTCHGSG), 175–182 (CTTCHGAG), 197–204 (CPHCHGSG), and 211–218 (CTSCNGAG). The segment at 362–385 (FRKGGDKHSPTSKSWTDRVKDLFK) is disordered.

It belongs to the DnaJ family. In terms of assembly, homodimer. Requires Zn(2+) as cofactor.

The protein localises to the cytoplasm. Its function is as follows. Participates actively in the response to hyperosmotic and heat shock by preventing the aggregation of stress-denatured proteins and by disaggregating proteins, also in an autonomous, DnaK-independent fashion. Unfolded proteins bind initially to DnaJ; upon interaction with the DnaJ-bound protein, DnaK hydrolyzes its bound ATP, resulting in the formation of a stable complex. GrpE releases ADP from DnaK; ATP binding to DnaK triggers the release of the substrate protein, thus completing the reaction cycle. Several rounds of ATP-dependent interactions between DnaJ, DnaK and GrpE are required for fully efficient folding. Also involved, together with DnaK and GrpE, in the DNA replication of plasmids through activation of initiation proteins. In Leptothrix cholodnii (strain ATCC 51168 / LMG 8142 / SP-6) (Leptothrix discophora (strain SP-6)), this protein is Chaperone protein DnaJ.